Here is a 371-residue protein sequence, read N- to C-terminus: Caytaxin (371 aa).

Residues 1–54 (MGTTEATLRMENVDVKEEWQDEDLPRPLPEETGVELLGSPVEDTSSPPNTLNFN) form a disordered region. Residues 11-29 (ENVDVKEEWQDEDLPRPLP) are compositionally biased toward basic and acidic residues. Residues 42-53 (EDTSSPPNTLNF) are compositionally biased toward polar residues. Residues 115–120 (ELEWGD) are required for interaction with KLC1. One can recognise a CRAL-TRIO domain in the interval 171 to 328 (IRPYMKVVTH…CVLQYEEERL (158 aa)). The tract at residues 190 to 371 (AIIVFAACFL…VTEDQETSMS (182 aa)) is mediates interaction with GLS. The tract at residues 331–371 (RRESARPQPEFVMPRSEEKPEVAPVENRSAPVTEDQETSMS) is disordered.

Interacts with KLC1; may link mitochondria to KLC1 and regulate mitochondria localization into neuron projections. Interacts with GLS; the interaction is direct and may control GLS localization, negatively regulating its activity. Interacts with PIN1 (via WW domain); upon NGF stimulation. The interaction with PIN1 and GLS is competitive. Post-translationally, cleaved by CASP3 and CASP7. The potential C-terminal product released by CASP3 cleavage may inhibit the ERK signaling pathway through MAP2K2. In terms of processing, may be ubiquitinated by STUB1.

The protein localises to the cell projection. The protein resides in the axon. It localises to the dendrite. Its subcellular location is the presynapse. It is found in the mitochondrion. The protein localises to the growth cone. The protein resides in the cytoplasm. In terms of biological role, functions in the development of neural tissues, particularly the postnatal maturation of the cerebellar cortex. May play a role in neurotransmission through regulation of glutaminase/GLS, an enzyme responsible for the production in neurons of the glutamate neurotransmitter. Alternatively, may regulate the localization of mitochondria within axons and dendrites. The sequence is that of Caytaxin (ATCAY) from Macaca fascicularis (Crab-eating macaque).